Here is a 451-residue protein sequence, read N- to C-terminus: Serine--tRNA ligase, cytoplasmic (451 aa).

A disulfide bond links Cys-213 and Cys-244. 238 to 240 is a binding site for L-serine; the sequence is TAE. ATP contacts are provided by residues 269–271 and Val-285; that span reads RKE. Glu-292 provides a ligand contact to L-serine. 358 to 361 serves as a coordination point for ATP; that stretch reads ELVS. An L-serine-binding site is contributed by Thr-396.

The protein belongs to the class-II aminoacyl-tRNA synthetase family. Type-1 seryl-tRNA synthetase subfamily. As to quaternary structure, homodimer. The tRNA molecule binds across the dimer.

It is found in the cytoplasm. It localises to the cytosol. The enzyme catalyses tRNA(Ser) + L-serine + ATP = L-seryl-tRNA(Ser) + AMP + diphosphate + H(+). Catalyzes the attachment of serine to tRNA(Ser) in a two-step reaction: serine is first activated by ATP to form Ser-AMP and then transferred to the acceptor end of tRNA(Ser). This Arabidopsis thaliana (Mouse-ear cress) protein is Serine--tRNA ligase, cytoplasmic.